We begin with the raw amino-acid sequence, 308 residues long: MITTVVGSYPVVKKEETFLDKVKKVFGLYDEYKYAIERAVKDQVKAGVNIISDGQVRGDMVEIFTNNMYGFDGKRVVGRVEFIKPITLKDILYAKSIAKKLNPNVEIKGIITGPCTIASSVRVESCYSDNRDENLIYDIAKALRKEVEALKKHVPIIQIDEPILSTGMYDFDVARKAIDIIVDGLNIKFAMHVCGNVYNIIDELNKFNVDILDHEFASNKKNLVILESMEKKVGFGCVNTKVKKVESVEEIKSLIEEGIEILKNNEKLNKNLSDNILIDPDCGMRLLPIDVAFNKLKNMVEATKLIKI.

Zn(2+) is bound by residues H192, C194, E215, and C282.

The protein belongs to the archaeal MetE family. The cofactor is Zn(2+).

It functions in the pathway amino-acid biosynthesis; L-methionine biosynthesis via de novo pathway. In terms of biological role, catalyzes the transfer of a methyl group to L-homocysteine resulting in methionine formation. Can use methylcobalamin and methylcobinamide as methyl donors, but methylcobalamin is not considered to be the physiological substrate. The polypeptide is Methionine synthase (Methanocaldococcus jannaschii (strain ATCC 43067 / DSM 2661 / JAL-1 / JCM 10045 / NBRC 100440) (Methanococcus jannaschii)).